The sequence spans 1022 residues: MGRGTGHDQYELAATSEGGRKKKRDKKKKDMDDLKKEVDLDDHKLTLDELHRKYGTDLTRGLTSSRAAEILARDGPNALTPPPTTPEWVKFCRQLFGGFSMLLWIGAILCFLAYGIQAASEDEPANDNLYLGVVLSAVVIITGCFSYYQEAKSSRIMDSFKNLVPQQALVIRDGEKKCINAEEVVAGDLVEVKGGDRIPADLRVASAQGCKVDNSSLTGESEPQTRSPDFSNENPLETRNIAFFSTNCVEGTARGVVINTGDRTVMGRIATLASSLEVGRTPISIEIEHFIHIITGVAVFLGVSFFILSLILGYAWLEAVIFLIGIIVANVPEGLLATVTVCLTLTAKRMAKKNCLVKNLEAVETLGSTSTICSDKTGTLTQNRMTVAHMWFDNQIHEADTTENQSGTSFDRSSATWAALARIAGLCNRAVFLAEQSNVPILKRDVAGDASESALLKCIELCCGSVNDMRDKHVKIAEIPFNSTNKYQLSIHKNANSEESKHLLVMKGAPERILDRCSTIMIHGKEQPLDDEMKDAFQNAYVELGGLGERVLGFCHYFLPDDQFAEGFQFDTEEVNFPTENLCFIGLMSMIDPPRAAVLDAVGKCRSPGIKVIMVTGDHPITAKAIAKGVGIISEGNETVEDIAARLNIPINEVNPRDAKACVVHGGELKDLTPEQLDDILKHHTEIVFARTSPQQKLIIVEGCQRQGAIVAVTGDGVNDSPALKKADIGVAMGIAGSDVSKQAADMILLDDNFASIVTGVEEGRLIFDNLKKSIAYTLTSNIPEITPFLLFIIANIPLPLGTVTILCIDLGTDMVPAISLAYEAAESDIMKRQPRNPRTDKLVNERLISIAYGQIGMMQATAGFFTYFVILAENGFLPSTLLGIRVKWDDKYVNDLEDSYGQQWTYEQRKIVEYTCHTSFFASIVIVQWADLIICKTRRNSIIQQGMKNKILIFGLFEETALAAFLSYCPGMDVALRMYPLKPSWWFCAFPYSLLIFLYDEARRFILRRNPDGWVERETYY.

A propeptide spanning residues 1–5 (MGRGT) is cleaved from the precursor. Positions 1 to 10 (MGRGTGHDQY) are enriched in basic and acidic residues. The interval 1-34 (MGRGTGHDQYELAATSEGGRKKKRDKKKKDMDDL) is disordered. Topologically, residues 6-86 (GHDQYELAAT…NALTPPPTTP (81 aa)) are cytoplasmic. Residue Ser16 is modified to Phosphoserine; by PKC. An interaction with phosphoinositide-3 kinase region spans residues 81–83 (PPP). The chain crosses the membrane as a helical span at residues 87–107 (EWVKFCRQLFGGFSMLLWIGA). Over 108–130 (ILCFLAYGIQAASEDEPANDNLY) the chain is Extracellular. Residues 131 to 151 (LGVVLSAVVIITGCFSYYQEA) form a helical membrane-spanning segment. Residues 152 to 287 (KSSRIMDSFK…VGRTPISIEI (136 aa)) are Cytoplasmic-facing. Residues 213–234 (DNSSLTGESEPQTRSPDFSNEN) are disordered. A helical membrane pass occupies residues 288–307 (EHFIHIITGVAVFLGVSFFI). The Extracellular portion of the chain corresponds to 308-319 (LSLILGYAWLEA). The helical transmembrane segment at 320 to 337 (VIFLIGIIVANVPEGLLA) threads the bilayer. Residues 338–771 (TVTVCLTLTA…EEGRLIFDNL (434 aa)) are Cytoplasmic-facing. Asp375 serves as the catalytic 4-aspartylphosphate intermediate. Residue Lys486 coordinates ATP. Residues Asp716 and Asp720 each contribute to the Mg(2+) site. A helical transmembrane segment spans residues 772 to 791 (KKSIAYTLTSNIPEITPFLL). The Extracellular segment spans residues 792–801 (FIIANIPLPL). Residues 802 to 822 (GTVTILCIDLGTDMVPAISLA) form a helical membrane-spanning segment. Over 823-842 (YEAAESDIMKRQPRNPRTDK) the chain is Cytoplasmic. The helical transmembrane segment at 843–865 (LVNERLISIAYGQIGMMQATAGF) threads the bilayer. Residues 866–917 (FTYFVILAENGFLPSTLLGIRVKWDDKYVNDLEDSYGQQWTYEQRKIVEYTC) lie on the Extracellular side of the membrane. Residues 918–937 (HTSFFASIVIVQWADLIICK) form a helical membrane-spanning segment. At 938 to 950 (TRRNSIIQQGMKN) the chain is on the cytoplasmic side. Ser942 carries the phosphoserine; by PKA modification. A helical membrane pass occupies residues 951–969 (KILIFGLFEETALAAFLSY). Residues 970–984 (CPGMDVALRMYPLKP) lie on the Extracellular side of the membrane. Residues 985 to 1005 (SWWFCAFPYSLLIFLYDEARR) form a helical membrane-spanning segment. At 1006–1022 (FILRRNPDGWVERETYY) the chain is on the cytoplasmic side.

The protein belongs to the cation transport ATPase (P-type) (TC 3.A.3) family. Type IIC subfamily. The sodium/potassium-transporting ATPase is composed of a catalytic alpha subunit, an auxiliary non-catalytic beta subunit and an additional regulatory subunit.

The protein resides in the cell membrane. It is found in the sarcolemma. It catalyses the reaction K(+)(out) + Na(+)(in) + ATP + H2O = K(+)(in) + Na(+)(out) + ADP + phosphate + H(+). This is the catalytic component of the active enzyme, which catalyzes the hydrolysis of ATP coupled with the exchange of sodium and potassium ions across the plasma membrane. This action creates the electrochemical gradient of sodium and potassium ions, providing the energy for active transport of various nutrients. This Anguilla anguilla (European freshwater eel) protein is Sodium/potassium-transporting ATPase subunit alpha-1 (atp1a1).